Reading from the N-terminus, the 263-residue chain is Methylesterase 18 (263 aa).

Catalysis depends on Ser80, which acts as the Acyl-ester intermediate. Catalysis depends on charge relay system residues Asp212 and His240.

It belongs to the AB hydrolase superfamily. Methylesterase family.

The catalysed reaction is methyl (indol-3-yl)acetate + H2O = (indol-3-yl)acetate + methanol + H(+). It functions in the pathway plant hormone biosynthesis. In terms of biological role, methylesterase shown to have methyl indole-3-acetic acid (MeIAA) esterase activity in vitro. The chain is Methylesterase 18 from Arabidopsis thaliana (Mouse-ear cress).